The following is a 363-amino-acid chain: NAD kinase 1 (363 aa).

Catalysis depends on Asp-68, which acts as the Proton acceptor. Residues 68-69 (DG), Arg-73, 175-176 (ND), Arg-186, Asp-205, Ala-240, and Gln-275 each bind NAD(+).

Belongs to the NAD kinase family. It depends on a divalent metal cation as a cofactor.

It localises to the cytoplasm. The catalysed reaction is NAD(+) + ATP = ADP + NADP(+) + H(+). Functionally, involved in the regulation of the intracellular balance of NAD and NADP, and is a key enzyme in the biosynthesis of NADP. Catalyzes specifically the phosphorylation on 2'-hydroxyl of the adenosine moiety of NAD to yield NADP. This is NAD kinase 1 from Streptomyces coelicolor (strain ATCC BAA-471 / A3(2) / M145).